The sequence spans 1571 residues: Phospholipid-transporting ATPase DNF1 (1571 aa).

The segment at 1-94 (MSGTFHGDGH…TPKLNNGSGT (94 aa)) is disordered. At 1 to 214 (MSGTFHGDGH…TFLPKNILFQ (214 aa)) the chain is on the cytoplasmic side. Basic and acidic residues predominate over residues 29 to 40 (EDTHIAPTHFDD). A compositionally biased stretch (polar residues) spans 42 to 56 (ATSNKYSRPQVSFND). Position 53 is a phosphoserine (Ser53). The segment covering 66-76 (AEEFTFNDDTE) has biased composition (acidic residues). Thr70 bears the Phosphothreonine mark. Positions 80-93 (HSFQPTPKLNNGSG) are enriched in polar residues. Ser81 bears the Phosphoserine mark. Thr85 carries the phosphothreonine modification. A Phosphoserine modification is found at Ser92. Thr94 is subject to Phosphothreonine. Ser104 carries the post-translational modification Phosphoserine. The residue at position 109 (Thr109) is a Phosphothreonine. A helical transmembrane segment spans residues 215–235 (FHNFANVYFLVLIILGAFQIF). The interval 234-241 (IFGVTNPG) is involved in phosphatidylcholine substrate selection. Topologically, residues 236–239 (GVTN) are extracellular. The helical transmembrane segment at 240–260 (PGLSAVPLVVIVIITAIKDAI) threads the bilayer. The Cytoplasmic segment spans residues 261-553 (EDSRRTVLDL…RISRELNFSV (293 aa)). Phosphoserine occurs at positions 351, 354, 358, and 365. The residue at position 368 (Tyr368) is a Phosphotyrosine. A helical membrane pass occupies residues 554–574 (VINFVLLFILCFVSGIANGVY). Residues 575–594 (YDKKGRSRFSYEFGTIAGSA) lie on the Extracellular side of the membrane. Residues 586 to 590 (EFGTI) form an involved in phosphatidylcholine substrate selection region. A helical transmembrane segment spans residues 595 to 615 (ATNGFVSFWVAVILYQSLVPI). Topologically, residues 616 to 1188 (SLYISVEIIK…WSYKRLAEMI (573 aa)) are cytoplasmic. Asp667 serves as the catalytic 4-aspartylphosphate intermediate. ATP-binding residues include Asp667, Lys668, Thr669, Glu801, Phe842, Ser844, Lys847, and Lys871. Asp667 lines the Mg(2+) pocket. Thr669 is a binding site for Mg(2+). A Glycyl lysine isopeptide (Lys-Gly) (interchain with G-Cter in ubiquitin) cross-link involves residue Lys895. 7 residues coordinate ATP: Arg909, Thr910, Thr989, Gly990, Asp991, Arg1104, and Lys1110. Asp1130 contributes to the Mg(2+) binding site. Positions 1133 and 1134 each coordinate ATP. Mg(2+) is bound at residue Asp1134. Residues 1189–1209 (PEFFYKNMIFALALFWYGIYN) traverse the membrane as a helical segment. At 1210-1219 (DFDGSYLYEY) the chain is on the extracellular side. Residues 1220–1240 (TYMMFYNLAFTSLPVIFLGIL) traverse the membrane as a helical segment. Over 1241-1270 (DQDVNDTISLVVPQLYRVGILRKEWNQRKF) the chain is Cytoplasmic. The helical transmembrane segment at 1271 to 1291 (LWYMLDGLYQSIICFFFPYLV) threads the bilayer. At 1292–1307 (YHKNMIVTSNGLGLDH) the chain is on the extracellular side. The helical transmembrane segment at 1308–1328 (RYFVGVYVTTIAVISCNTYVL) threads the bilayer. Residues 1329–1334 (LHQYRW) lie on the Cytoplasmic side of the membrane. Residues 1335 to 1355 (DWFSGLFIALSCLVVFAWTGI) form a helical membrane-spanning segment. Residues 1356 to 1375 (WSSAIASREFFKAAARIYGA) are Extracellular-facing. A helical membrane pass occupies residues 1376 to 1396 (PSFWAVFFVAVLFCLLPRFTY). Position 1393 (Arg1393) interacts with a 1,2-diacyl-sn-glycero-3-phospho-L-serine. The Cytoplasmic segment spans residues 1397-1571 (DSFQKFFYPT…ASLIGTQQNN (175 aa)). Ser1506 is modified (phosphoserine). The residue at position 1551 (Thr1551) is a Phosphothreonine. Phosphoserine occurs at positions 1552 and 1563.

Belongs to the cation transport ATPase (P-type) (TC 3.A.3) family. Type IV subfamily. As to quaternary structure, component of a flippase complex consisting of DNF1 and LEM3. Interacts with LEM3; the interaction is direct and required for their mutual export from the endoplasmic reticulum. Requires Mg(2+) as cofactor. Phosphorylated by FPK1 and KIN82.

It localises to the cell membrane. The protein resides in the endosome membrane. The protein localises to the golgi apparatus. It is found in the trans-Golgi network membrane. Its subcellular location is the cell septum. It localises to the bud. The catalysed reaction is ATP + H2O + phospholipidSide 1 = ADP + phosphate + phospholipidSide 2.. It carries out the reaction a 1,2-diacyl-sn-glycero-3-phosphoethanolamine(out) + ATP + H2O = a 1,2-diacyl-sn-glycero-3-phosphoethanolamine(in) + ADP + phosphate + H(+). The enzyme catalyses a 1,2-diacyl-sn-glycero-3-phosphocholine(out) + ATP + H2O = a 1,2-diacyl-sn-glycero-3-phosphocholine(in) + ADP + phosphate + H(+). It catalyses the reaction a beta-D-glucosyl-(1&lt;-&gt;1')-N-acylsphing-4-enine(out) + ATP + H2O = a beta-D-glucosyl-(1&lt;-&gt;1')-N-acylsphing-4-enine(in) + ADP + phosphate + H(+). The catalysed reaction is a 1,2-diacyl-sn-glycero-3-phospho-L-serine(out) + ATP + H2O = a 1,2-diacyl-sn-glycero-3-phospho-L-serine(in) + ADP + phosphate + H(+). In terms of biological role, catalytic component of a P4-ATPase flippase complex which catalyzes the hydrolysis of ATP coupled to the transport of glucosylceramide, phosphatidylcholine, phosphatidylethanolamine, and small amounts of phosphatidylserine from the lumenal to the cytosolic leaflet of the cell membrane and ensures the maintenance of asymmetric distribution of phospholipids. Does not appear to transport sphingomyelin, inositol phosphoceramide, or phosphatidic acid. Required for efficient endocytosis. This chain is Phospholipid-transporting ATPase DNF1, found in Saccharomyces cerevisiae (strain ATCC 204508 / S288c) (Baker's yeast).